A 280-amino-acid chain; its full sequence is DegV domain-containing protein SPy_1698/M5005_Spy1391 (280 aa).

The region spanning Trp-3–Ile-280 is the DegV domain. Ser-63 and Ser-91 together coordinate hexadecanoate.

In terms of biological role, may bind long-chain fatty acids, such as palmitate, and may play a role in lipid transport or fatty acid metabolism. The sequence is that of DegV domain-containing protein SPy_1698/M5005_Spy1391 from Streptococcus pyogenes serotype M1.